We begin with the raw amino-acid sequence, 535 residues long: WD repeat-containing protein 25 (535 aa).

2 disordered regions span residues Met-1 to Ser-108 and Asp-141 to Gly-160. Positions Asp-141–Ser-155 are enriched in polar residues. WD repeat units lie at residues Gly-235–Gln-277, Val-281–Ser-320, Gly-321–Gly-362, Ala-365–Asn-411, His-415–Arg-454, Gly-460–Thr-501, and Gly-504–His-535.

The sequence is that of WD repeat-containing protein 25 (Wdr25) from Mus musculus (Mouse).